Here is a 323-residue protein sequence, read N- to C-terminus: Protein REDOX 2 (323 aa).

Residue D53 participates in NADP(+) binding. Catalysis depends on Y58, which acts as the Proton donor. Residue H121 coordinates substrate. NADP(+) is bound by residues 167-168, Q189, 215-220, and 289-297; these read SN, WSPLLS, and DQIHEIPQR. Residues 302–323 form a disordered region; the sequence is GEEFMHPEGPIKSPEELWDGDL.

This sequence belongs to the aldo/keto reductase family. In terms of assembly, monomer. Expressed in leaf epidermis.

The enzyme catalyses 15alpha-stemmadenine + NADP(+) = 17-dehydrostemmadenine + NADPH + 2 H(+). Its pathway is alkaloid biosynthesis. In terms of biological role, component of iboga and aspidosperma monoterpenoid indole alkaloids (MIAs, e.g. tabersonine and catharanthine) biosynthesis pathway from 19E-geissoschizine. Catalyzes the second oxidation step of the unstable intermediate product resulting from the reaction triggered by the geissoschizine oxidase (GO) in the stemmadenine biosynthesis process from 19E-geissoschizine. The protein is Protein REDOX 2 of Catharanthus roseus (Madagascar periwinkle).